The primary structure comprises 150 residues: Large ribosomal subunit protein bL9 (150 aa).

The protein belongs to the bacterial ribosomal protein bL9 family.

In terms of biological role, binds to the 23S rRNA. The sequence is that of Large ribosomal subunit protein bL9 from Wolinella succinogenes (strain ATCC 29543 / DSM 1740 / CCUG 13145 / JCM 31913 / LMG 7466 / NCTC 11488 / FDC 602W) (Vibrio succinogenes).